A 379-amino-acid chain; its full sequence is ATPase ASNA1 homolog (379 aa).

Positions 1 to 20 are disordered; that stretch reads MSEDESNSVSCSLSLESDGY. Positions 7–18 are enriched in low complexity; that stretch reads NSVSCSLSLESD. ATP is bound at residue 46–53; the sequence is KGGVGKTT. D75 is a catalytic residue. E246 and N273 together coordinate ATP.

Belongs to the arsA ATPase family. As to quaternary structure, homodimer.

The protein resides in the cytoplasm. It is found in the endoplasmic reticulum. Functionally, ATPase required for the post-translational delivery of tail-anchored (TA) proteins to the endoplasmic reticulum. Recognizes and selectively binds the transmembrane domain of TA proteins in the cytosol. This complex then targets to the endoplasmic reticulum by membrane-bound receptors, where the tail-anchored protein is released for insertion. This process is regulated by ATP binding and hydrolysis. ATP binding drives the homodimer towards the closed dimer state, facilitating recognition of newly synthesized TA membrane proteins. ATP hydrolysis is required for insertion. Subsequently, the homodimer reverts towards the open dimer state, lowering its affinity for the membrane-bound receptor, and returning it to the cytosol to initiate a new round of targeting. The polypeptide is ATPase ASNA1 homolog (Plasmodium falciparum (isolate 3D7)).